The chain runs to 513 residues: ATP synthase subunit alpha (513 aa).

169–176 (GDRQTGKT) contacts ATP.

It belongs to the ATPase alpha/beta chains family. As to quaternary structure, F-type ATPases have 2 components, CF(1) - the catalytic core - and CF(0) - the membrane proton channel. CF(1) has five subunits: alpha(3), beta(3), gamma(1), delta(1), epsilon(1). CF(0) has three main subunits: a(1), b(2) and c(9-12). The alpha and beta chains form an alternating ring which encloses part of the gamma chain. CF(1) is attached to CF(0) by a central stalk formed by the gamma and epsilon chains, while a peripheral stalk is formed by the delta and b chains.

It is found in the cell inner membrane. It carries out the reaction ATP + H2O + 4 H(+)(in) = ADP + phosphate + 5 H(+)(out). In terms of biological role, produces ATP from ADP in the presence of a proton gradient across the membrane. The alpha chain is a regulatory subunit. This is ATP synthase subunit alpha from Glaesserella parasuis serovar 5 (strain SH0165) (Haemophilus parasuis).